Here is a 137-residue protein sequence, read N- to C-terminus: DNA-directed RNA polymerase I subunit RPA14 (137 aa).

Residues 100–137 form a disordered region; the sequence is PPAQDFSAAPIQVSTTEKKETSIGVSATGGKKTTFADE. The residue at position 121 (S121) is a Phosphoserine.

In terms of assembly, component of the RNA polymerase I (Pol I) complex consisting of 14 subunits: RPA135, RPA190, RPC40, RPA14, RPB5, RPO26, RPA43, RPB8, RPA12, RPB10, RPC19, RPC10, RPA49 and RPA34. The complex is composed of a horseshoe-shaped core containing ten subunits (RPA135, RPA190, RPB5, RPO26, RPB8, RPB10, RPC10, RPA12, RPC19 and RPC40) where RPA135 and RPA190 form the DNA-binding cleft. Outside of the core, RPA14 and RPA43 form the stalk that mediates interactions with transcription initiation factors and newly synthesized RNA. The N-terminus is blocked.

Its subcellular location is the nucleus. It localises to the nucleolus. Functionally, DNA-dependent RNA polymerases catalyze the transcription of DNA into RNA using the four ribonucleoside triphosphates as substrates. Component of RNA polymerase I (Pol I) which synthesizes ribosomal RNA precursors. RPA14 seems to play a role in the stability of subunits RPO26 and RPA43. In vitro, the RPA14-RPA43 subcomplex binds single-stranded RNA. The chain is DNA-directed RNA polymerase I subunit RPA14 (RPA14) from Saccharomyces cerevisiae (strain ATCC 204508 / S288c) (Baker's yeast).